A 340-amino-acid chain; its full sequence is Cysteinyl leukotriene receptor 1 (340 aa).

Topologically, residues Met1–Thr31 are extracellular. N-linked (GlcNAc...) asparagine glycosylation is found at Asn6 and Asn18. The helical transmembrane segment at Leu32–Ile52 threads the bilayer. Topologically, residues Lys53–Ala60 are cytoplasmic. A helical transmembrane segment spans residues Tyr61 to Leu81. Residues Arg82 to Asn109 are Extracellular-facing. A disulfide bridge links Cys99 with Cys176. Residues Leu110–Phe130 form a helical membrane-spanning segment. At Pro131–Lys144 the chain is on the cytoplasmic side. The chain crosses the membrane as a helical span at residues Ile145–Thr165. The Extracellular segment spans residues Ser166–Ser196. Asn172 is a glycosylation site (N-linked (GlcNAc...) asparagine). Residues Leu197–Leu217 traverse the membrane as a helical segment. Residues Thr218–Lys233 lie on the Cytoplasmic side of the membrane. The chain crosses the membrane as a helical span at residues Ala234–Ile254. The Extracellular segment spans residues Gln255–Ser279. Asn265 carries N-linked (GlcNAc...) asparagine glycosylation. A helical membrane pass occupies residues Val280 to Phe300. The Cytoplasmic segment spans residues Ser301–Glu340.

The protein belongs to the G-protein coupled receptor 1 family.

Its subcellular location is the cell membrane. Its function is as follows. Receptor for cysteinyl leukotrienes mediating constriction of the microvascular smooth muscle during an inflammatory response. This response is mediated via a G-protein that activates a phosphatidylinositol-calcium second messenger system. The polypeptide is Cysteinyl leukotriene receptor 1 (CYSLTR1) (Sus scrofa (Pig)).